A 65-amino-acid polypeptide reads, in one-letter code: Large ribosomal subunit protein bL35 (65 aa).

The interval 1–46 (MPKIKTNRGAAKRFKPTGSGGFKRAQSHRRHILTKKSTKRKRHLRS) is disordered. A compositionally biased stretch (basic residues) spans 25–45 (AQSHRRHILTKKSTKRKRHLR).

The protein belongs to the bacterial ribosomal protein bL35 family.

In Thioalkalivibrio sulfidiphilus (strain HL-EbGR7), this protein is Large ribosomal subunit protein bL35.